The chain runs to 300 residues: UPF0761 membrane protein Patl_3954 (300 aa).

The next 6 membrane-spanning stretches (helical) occupy residues 46-66, 103-123, 138-158, 184-204, 214-234, and 248-268; these read LLSLVPFIMVFFTILSAFPAF, MGAIGILSLVVVALLLISNID, IIFTFAIYWMILTLGPLLIGL, MLKIVPFIASVCAFFILYMIV, ALVGAFMGALLFELSKKGFSF, and AMAVIPILFVWVYLSWIVVLL.

It belongs to the UPF0761 family.

It is found in the cell inner membrane. This is UPF0761 membrane protein Patl_3954 from Pseudoalteromonas atlantica (strain T6c / ATCC BAA-1087).